We begin with the raw amino-acid sequence, 132 residues long: Large ribosomal subunit protein uL14 (132 aa).

The protein belongs to the universal ribosomal protein uL14 family. As to quaternary structure, part of the 50S ribosomal subunit. Forms a cluster with proteins L3 and L24e, part of which may contact the 16S rRNA in 2 intersubunit bridges.

Binds to 23S rRNA. Forms part of two intersubunit bridges in the 70S ribosome. The chain is Large ribosomal subunit protein uL14 from Natronomonas pharaonis (strain ATCC 35678 / DSM 2160 / CIP 103997 / JCM 8858 / NBRC 14720 / NCIMB 2260 / Gabara) (Halobacterium pharaonis).